A 184-amino-acid chain; its full sequence is ATP-dependent protease subunit HslV (184 aa).

T11 is an active-site residue. Positions 165, 168, and 171 each coordinate Na(+).

It belongs to the peptidase T1B family. HslV subfamily. In terms of assembly, a double ring-shaped homohexamer of HslV is capped on each side by a ring-shaped HslU homohexamer. The assembly of the HslU/HslV complex is dependent on binding of ATP.

It localises to the cytoplasm. It carries out the reaction ATP-dependent cleavage of peptide bonds with broad specificity.. Its activity is regulated as follows. Allosterically activated by HslU binding. Functionally, protease subunit of a proteasome-like degradation complex believed to be a general protein degrading machinery. In Zymomonas mobilis subsp. mobilis (strain ATCC 31821 / ZM4 / CP4), this protein is ATP-dependent protease subunit HslV.